A 159-amino-acid chain; its full sequence is Ribosomal RNA large subunit methyltransferase H (159 aa).

Residues leucine 76, glycine 108, and 127–132 (FGRMTY) contribute to the S-adenosyl-L-methionine site.

It belongs to the RNA methyltransferase RlmH family. In terms of assembly, homodimer.

Its subcellular location is the cytoplasm. It catalyses the reaction pseudouridine(1915) in 23S rRNA + S-adenosyl-L-methionine = N(3)-methylpseudouridine(1915) in 23S rRNA + S-adenosyl-L-homocysteine + H(+). Specifically methylates the pseudouridine at position 1915 (m3Psi1915) in 23S rRNA. This Carboxydothermus hydrogenoformans (strain ATCC BAA-161 / DSM 6008 / Z-2901) protein is Ribosomal RNA large subunit methyltransferase H.